Consider the following 622-residue polypeptide: Low affinity potassium transport system protein Kup (622 aa).

12 helical membrane-spanning segments follow: residues 9-29 (LPAV…TSPL), 49-69 (VFGF…LKYL), 101-121 (VLVI…VITP), 137-157 (PSMD…LFII), 165-185 (VGKL…VLGA), 212-232 (AVSF…EALY), 247-267 (WFTV…ALLL), 279-299 (LLAP…ATII), 337-357 (IYIP…IVSF), 363-383 (LAAA…ILFC), 397-417 (AWVL…ANVV), and 419-439 (ILSG…IMTT).

The protein belongs to the HAK/KUP transporter (TC 2.A.72) family.

The protein resides in the cell inner membrane. It catalyses the reaction K(+)(in) + H(+)(in) = K(+)(out) + H(+)(out). Functionally, responsible for the low-affinity transport of potassium into the cell. Likely operates as a K(+):H(+) symporter. This is Low affinity potassium transport system protein Kup from Pectobacterium carotovorum subsp. carotovorum (strain PC1).